A 453-amino-acid polypeptide reads, in one-letter code: Tol-Pal system protein TolB (453 aa).

Positions 1-31 are cleaved as a signal peptide; sequence MINNLSVSMTKVLKIILTIIIILFNTLSILA.

Belongs to the TolB family. The Tol-Pal system is composed of five core proteins: the inner membrane proteins TolA, TolQ and TolR, the periplasmic protein TolB and the outer membrane protein Pal. They form a network linking the inner and outer membranes and the peptidoglycan layer.

The protein localises to the periplasm. Functionally, part of the Tol-Pal system, which plays a role in outer membrane invagination during cell division and is important for maintaining outer membrane integrity. The chain is Tol-Pal system protein TolB from Orientia tsutsugamushi (strain Boryong) (Rickettsia tsutsugamushi).